Reading from the N-terminus, the 296-residue chain is uncharacterized protein (296 aa).

A signal peptide spans 1–20 (MRKFIFVLLTLLLVSPFSFA).

This is an uncharacterized protein from Escherichia coli (strain K12).